We begin with the raw amino-acid sequence, 195 residues long: Imidazoleglycerol-phosphate dehydratase (195 aa).

It belongs to the imidazoleglycerol-phosphate dehydratase family.

The protein localises to the cytoplasm. The catalysed reaction is D-erythro-1-(imidazol-4-yl)glycerol 3-phosphate = 3-(imidazol-4-yl)-2-oxopropyl phosphate + H2O. The protein operates within amino-acid biosynthesis; L-histidine biosynthesis; L-histidine from 5-phospho-alpha-D-ribose 1-diphosphate: step 6/9. This chain is Imidazoleglycerol-phosphate dehydratase, found in Paraburkholderia phymatum (strain DSM 17167 / CIP 108236 / LMG 21445 / STM815) (Burkholderia phymatum).